Here is a 383-residue protein sequence, read N- to C-terminus: Trihelix transcription factor ASIL1 (383 aa).

Disordered regions lie at residues 1 to 32, 61 to 94, 189 to 295, and 346 to 383; these read MEDD…LPTN, HTPS…DDCW, IASS…SGVG, and EITQ…NVSS. A compositionally biased stretch (gly residues) spans 66 to 88; the sequence is TGGGGSGNRNGRGGGGGSGGGGG. The Myb-like domain maps to 94–153; that stretch reads WSEEATKVLIEAWGDRFSEPGKGTLKQQHWKEVAEIVNKSRQCKYPKTDIQCKNRIDTVK. Residues 206-225 are compositionally biased toward polar residues; that stretch reads NSRSSMFKRQTKGNQIVQQQ. A compositionally biased stretch (basic and acidic residues) spans 226-235; it reads QEKRGSDSMR. Residues 228–241 carry the Bipartite nuclear localization signal motif; the sequence is KRGSDSMRWHFRKR. Residues 246-262 show a composition bias toward acidic residues; that stretch reads TESESDPEPEASPEESA. The segment covering 263–274 has biased composition (low complexity); that stretch reads ESLPPLQPIQPL. The stretch at 304–365 forms a coiled coil; that stretch reads FTEAYEKAET…ERSRQRGERR (62 aa). A compositionally biased stretch (basic and acidic residues) spans 356 to 367; the sequence is ERSRQRGERRIV.

The protein localises to the nucleus. Functionally, transcription repressor that binds specific DNA sequence such as the GT-box-like motif 5'-CGTGATT-3' in the AT2S3 promoter. Negative regulator of seed maturation genes during seed germination and seedling development. May target GT-box-containing embryonic genes by competing with the binding of transcriptional activators to this promoter region. Contributes to the maintenance and control of seed filling and may repress the maturation program during early embryogenesis. The sequence is that of Trihelix transcription factor ASIL1 from Arabidopsis thaliana (Mouse-ear cress).